The chain runs to 664 residues: Intraflagellar transport protein 70A2 (664 aa).

TPR repeat units follow at residues 11 to 44 (DGEFTAVVYRLIRDSRYSEAVQLLSAELQRSPRS), 45 to 78 (RAGLSLLAYCYYRLQEFELAAECYEQLSQMHPEL), 153 to 186 (PDGLVNMGCLLYKEGHYEAACSKFFAALQASGYQ), 188 to 220 (DVSYNLALACYSNRHYAPALKHIANIIERGIRQ), 395 to 423 (QVQEARHNRDDEVVIKAVNEYDETLEKYI), 424 to 456 (PVLMAQAKIYWNLENYQMVEKIFRKSVEFCNDH), and 458 to 491 (VWKLNVAHVLFMQENKYKEAIGFYEPIVKKNYDN). Residues 507-534 (YIMTSQNEEAEELMRKIEKEEEQLSYGD) adopt a coiled-coil conformation. One copy of the TPR 8 repeat lies at 543-576 (CIVNLVIGTLYCAKGNYDFGISRVIKSLEPYHKK).

It belongs to the TTC30/dfy-1/fleer family. As to quaternary structure, interacts wit the IFT B complex component IFT52.

It is found in the cell projection. Its subcellular location is the cilium. Functionally, required for polyglutamylation of axonemal tubulin. Plays a role in anterograde intraflagellar transport (IFT), the process by which cilia precursors are transported from the base of the cilium to the site of their incorporation at the tip. This Rattus norvegicus (Rat) protein is Intraflagellar transport protein 70A2 (Ift70a2).